Consider the following 411-residue polypeptide: UDP-N-acetylmuramoylalanine--D-glutamate ligase (411 aa).

92-98 provides a ligand contact to ATP; it reads GTDGKST.

This sequence belongs to the MurCDEF family.

The protein localises to the cytoplasm. It catalyses the reaction UDP-N-acetyl-alpha-D-muramoyl-L-alanine + D-glutamate + ATP = UDP-N-acetyl-alpha-D-muramoyl-L-alanyl-D-glutamate + ADP + phosphate + H(+). It participates in cell wall biogenesis; peptidoglycan biosynthesis. Cell wall formation. Catalyzes the addition of glutamate to the nucleotide precursor UDP-N-acetylmuramoyl-L-alanine (UMA). The polypeptide is UDP-N-acetylmuramoylalanine--D-glutamate ligase (Hydrogenobaculum sp. (strain Y04AAS1)).